The primary structure comprises 535 residues: MADSKRTGLGEDGAKATYDRLTNDRRAYETRAENCAQYTIPSLFPKESDNESTDYTTPWQAVGARGLNNLASKLMLALFPMQSWMKLTISEYEAKQLVGDPDGLAKVDEGLSMVERIIMNYIESNSYRVTLFECLKQLIVAGNALLYLPEPEGSYNPMKLYRLSSYVVQRDAYGNVLQIVTRDQIAFGALPEDVRSAVEKSGGEKKMDEMVDVYTHVYLDEESGDYLKYEEVEDVEIDGSDATYPTDAMPYIPVRMVRIDGESYGRSYCEEYLGDLRSLENLQEAIVKMSMISAKVIGLVNPAGITQPRRLTKAQTGDFVPGRREDIDFLQLEKQADFTVAKAVSDQIEARLSYAFMLNSAVQRTGERVTAEEIRYVASELEDTLGGVYSILSQELQLPLVRVLLKQLQATSQIPELPKEAVEPTISTGLEAIGRGQDLDKLERCISAWAALAPMQGDPDINLAVIKLRIANAIGIDTSGILLTDEQKQALMMQDAAQTGVENAAAAGGAGVGALATSSPEAMQGAAAKAGLNAT.

Belongs to the podoviridae portal protein family. Homododecamer. Interacts with major capsid protein. Interacts with the tail tube proteins gp11 and gp12. Interacts with the terminase large subunit. Interacts with the internal virion protein gp14.

The protein resides in the virion. Forms the portal vertex of the capsid. This portal plays critical roles in head assembly, genome packaging, neck/tail attachment, and genome ejection. The portal protein multimerizes as a single ring-shaped homododecamer arranged around a central channel. This Enterobacteria phage T3 (Bacteriophage T3) protein is Portal protein (8).